The chain runs to 429 residues: Gamma-glutamyl phosphate reductase (429 aa).

The protein belongs to the gamma-glutamyl phosphate reductase family.

The protein localises to the cytoplasm. It catalyses the reaction L-glutamate 5-semialdehyde + phosphate + NADP(+) = L-glutamyl 5-phosphate + NADPH + H(+). Its pathway is amino-acid biosynthesis; L-proline biosynthesis; L-glutamate 5-semialdehyde from L-glutamate: step 2/2. Functionally, catalyzes the NADPH-dependent reduction of L-glutamate 5-phosphate into L-glutamate 5-semialdehyde and phosphate. The product spontaneously undergoes cyclization to form 1-pyrroline-5-carboxylate. The chain is Gamma-glutamyl phosphate reductase from Rhizorhabdus wittichii (strain DSM 6014 / CCUG 31198 / JCM 15750 / NBRC 105917 / EY 4224 / RW1) (Sphingomonas wittichii).